Here is a 306-residue protein sequence, read N- to C-terminus: Ectoine dioxygenase (306 aa).

Q127 serves as a coordination point for L-ectoine. Position 133 (K133) interacts with 2-oxoglutarate. Residues H144, D146, and H245 each coordinate Fe cation.

Belongs to the PhyH family. EctD subfamily. Homodimer. Fe(2+) serves as cofactor.

It carries out the reaction L-ectoine + 2-oxoglutarate + O2 = 5-hydroxyectoine + succinate + CO2. Functionally, involved in the biosynthesis of 5-hydroxyectoine, called compatible solute, which helps organisms to survive extreme osmotic stress by acting as a highly soluble organic osmolyte. Catalyzes the 2-oxoglutarate-dependent selective hydroxylation of L-ectoine to yield (4S,5S)-5-hydroxyectoine. The chain is Ectoine dioxygenase from Sphingopyxis alaskensis (strain DSM 13593 / LMG 18877 / RB2256) (Sphingomonas alaskensis).